The chain runs to 267 residues: Membrane-spanning 4-domains subfamily A member 10 (267 aa).

Topologically, residues 1 to 61 (MKAEATVIPS…KKSSLLKELG (61 aa)) are cytoplasmic. A helical membrane pass occupies residues 62 to 82 (AFHITIALLHLVFGGYLASIV). At 83 to 91 (KNLHLVVLK) the chain is on the extracellular side. Residues 92–112 (SWYPFWGAASFLISGILAITM) form a helical membrane-spanning segment. Residues 113–121 (KTFSKTYLK) are Cytoplasmic-facing. The helical transmembrane segment at 122–142 (MLCLMTNLISLFCVLSGLFVI) threads the bilayer. Residues 143–171 (SKDLFLESPFESPIWRMYPNSTVHIQRLE) are Extracellular-facing. A helical transmembrane segment spans residues 172-192 (LALLCFTVLELFLPVPTAVTA). Over 193–267 (WRGDCPSAKN…GAAIWTQTAN (75 aa)) the chain is Cytoplasmic.

This sequence belongs to the MS4A family.

The protein resides in the membrane. Its function is as follows. May be involved in signal transduction as a component of a multimeric receptor complex. This chain is Membrane-spanning 4-domains subfamily A member 10 (MS4A10), found in Homo sapiens (Human).